The primary structure comprises 897 residues: Protein SAP1 (897 aa).

5 disordered regions span residues E112–Q144, P195–K219, Q302–T398, S413–V438, and K456–P561. Residues M120–T137 show a composition bias toward polar residues. Over residues N209–K219 the composition is skewed to basic and acidic residues. A compositionally biased stretch (low complexity) spans S307–S321. Over residues L364–I380 the composition is skewed to polar residues. The span at K468 to T478 shows a compositional bias: basic residues. Positions K480 to P496 are enriched in low complexity. Residues V497–K523 are compositionally biased toward polar residues. Position 536 is a phosphoserine (S536). Residue G645–T652 coordinates ATP.

The protein belongs to the AAA ATPase family. In terms of assembly, interacts with SPT2/SIN1.

The polypeptide is Protein SAP1 (SAP1) (Saccharomyces cerevisiae (strain ATCC 204508 / S288c) (Baker's yeast)).